Consider the following 349-residue polypeptide: Phosphoribosylformylglycinamidine cyclo-ligase (349 aa).

The protein belongs to the AIR synthase family.

The protein localises to the cytoplasm. The enzyme catalyses 2-formamido-N(1)-(5-O-phospho-beta-D-ribosyl)acetamidine + ATP = 5-amino-1-(5-phospho-beta-D-ribosyl)imidazole + ADP + phosphate + H(+). The protein operates within purine metabolism; IMP biosynthesis via de novo pathway; 5-amino-1-(5-phospho-D-ribosyl)imidazole from N(2)-formyl-N(1)-(5-phospho-D-ribosyl)glycinamide: step 2/2. This is Phosphoribosylformylglycinamidine cyclo-ligase from Listeria monocytogenes serotype 4b (strain CLIP80459).